The primary structure comprises 316 residues: DnaJ homolog subfamily B member 13 (316 aa).

A J domain is found at 4 to 68 (DYYSVLGITR…MKRGIYDKFG (65 aa)).

As to quaternary structure, homodimer. Component of the axonemal radial spoke complex 1 (RS1), at least composed of spoke head proteins RSPH1, RSPH3, RSPH9 and the cilia-specific component RSPH4A or sperm-specific component RSPH6A, spoke stalk proteins RSPH14, DNAJB13, DYDC1, ROPN1L and NME5, and the anchor protein IQUB. Interacts with SUN5. Interacts with IQUB. Specifically expressed in testis and trachea.

Its subcellular location is the cell projection. The protein resides in the cilium. It localises to the flagellum. Its function is as follows. Functions as part of axonemal radial spoke complexes that play an important part in the motility of sperm and cilia. The chain is DnaJ homolog subfamily B member 13 (DNAJB13) from Homo sapiens (Human).